Consider the following 374-residue polypeptide: DNA/RNA-binding protein ALBA4 (374 aa).

It belongs to the histone-like Alba family.

Its subcellular location is the cytoplasm. It localises to the cell cortex. It is found in the perinuclear region. Functionally, possesses DNA- and RNA-binding activities. Binds to DNA with relaxed sequence specificity. May associate with the subtelomeric TARE6 repeats. Regulates the abundance of transcript sub-populations in a stage-specific manner. Regulates activation of male gametocytes. Participates in the coordination of sporozoite development in the oocyst. This Plasmodium yoelii yoelii protein is DNA/RNA-binding protein ALBA4.